A 687-amino-acid polypeptide reads, in one-letter code: Putative pentatricopeptide repeat-containing protein At3g15930 (687 aa).

13 PPR repeats span residues 98–132, 133–168, 169–199, 200–234, 235–269, 270–304, 305–331, 332–366, 367–401, 402–432, 433–467, 468–498, and 504–534; these read DVVVWNNMIKGWSKVDCDGEGVRLYLNMLKEGVTP, DSHTFPFLLNGLKRDGGALACGKKLHCHVVKFGLGS, NLYVQNALVKMYSLCGLMDMARGVFDRRCKE, DVFSWNLMISGYNRMKEYEESIELLVEMERNLVSP, TSVTLLLVLSACSKVKDKDLCKRVHEYVSECKTEP, SLRLENALVNAYAACGEMDIAVRIFRSMKARDVIS, WTSIVKGYVERGNLKLARTYFDQMPVR, DRISWTIMIDGYLRAGCFNESLEIFREMQSAGMIP, DEFTMVSVLTACAHLGSLEIGEWIKTYIDKNKIKN, DVVVGNALIDMYFKCGCSEKAQKVFHDMDQR, DKFTWTAMVVGLANNGQGQEAIKVFFQMQDMSIQP, DDITYLGVLSACNHSGMVDQARKFFAKMRSD, and SLVHYGCMVDMLGRAGLVKEAYEILRKMPMN. The tract at residues 539–614 is type E motif; that stretch reads VWGALLGASR…TPGFSLIEVN (76 aa). The interval 615-645 is type E(+) motif; it reads GFAHEFVAGDKSHLQSEEIYMKLEELAQEST.

Belongs to the PPR family. PCMP-E subfamily.

The chain is Putative pentatricopeptide repeat-containing protein At3g15930 (PCMP-E51) from Arabidopsis thaliana (Mouse-ear cress).